The primary structure comprises 582 residues: uncharacterized protein (582 aa).

The N-terminal stretch at 1–27 (MNYAVLPPELNSLRMFTGAGSAPMLAA) is a signal peptide. Positions 241–257 (GNGRAGLPGSGNVGNGN) are enriched in gly residues. The segment at 241-278 (GNGRAGLPGSGNVGNGNLGNSNLGSGNTGNSNVGFGNT) is disordered. Residues 258-278 (LGNSNLGSGNTGNSNVGFGNT) are compositionally biased toward low complexity.

It belongs to the mycobacterial PPE family.

This is an uncharacterized protein from Mycobacterium tuberculosis (strain ATCC 25618 / H37Rv).